Reading from the N-terminus, the 171-residue chain is uncharacterized protein (171 aa).

This is an uncharacterized protein from Orgyia pseudotsugata multicapsid polyhedrosis virus (OpMNPV).